Here is a 137-residue protein sequence, read N- to C-terminus: Methylglyoxal synthase (137 aa).

The MGS-like domain maps to 1-137; that stretch reads MKIALIAHDK…NLVRGGEPNV (137 aa). Substrate is bound by residues H8, K12, 34 to 37, and 54 to 55; these read TGTT and SG. Residue D60 is the Proton donor/acceptor of the active site. H87 provides a ligand contact to substrate.

The protein belongs to the methylglyoxal synthase family.

The enzyme catalyses dihydroxyacetone phosphate = methylglyoxal + phosphate. Functionally, catalyzes the formation of methylglyoxal from dihydroxyacetone phosphate. This is Methylglyoxal synthase from Bacillus velezensis (strain DSM 23117 / BGSC 10A6 / LMG 26770 / FZB42) (Bacillus amyloliquefaciens subsp. plantarum).